The following is a 157-amino-acid chain: MQEENQHPEQDDISEAQDAGAAGSLDARIAELEAQLAEQQANVLYVKAEGENIRRRAAEDIDKARKFALEKFSSELLAVKDSLDAALVVENATVESYKSGVELTAKQLLSVFEKFHITEINPLGEKFDPNKHQAISMLESDQEPNSVISVLQNVRPE.

Positions 1 to 10 are enriched in basic and acidic residues; the sequence is MQEENQHPEQ. Positions 1–21 are disordered; that stretch reads MQEENQHPEQDDISEAQDAGA.

Belongs to the GrpE family. Homodimer.

The protein localises to the cytoplasm. Its function is as follows. Participates actively in the response to hyperosmotic and heat shock by preventing the aggregation of stress-denatured proteins, in association with DnaK and GrpE. It is the nucleotide exchange factor for DnaK and may function as a thermosensor. Unfolded proteins bind initially to DnaJ; upon interaction with the DnaJ-bound protein, DnaK hydrolyzes its bound ATP, resulting in the formation of a stable complex. GrpE releases ADP from DnaK; ATP binding to DnaK triggers the release of the substrate protein, thus completing the reaction cycle. Several rounds of ATP-dependent interactions between DnaJ, DnaK and GrpE are required for fully efficient folding. In Methylovorus sp. (strain SS1 / DSM 11726), this protein is Protein GrpE.